The following is a 174-amino-acid chain: uncharacterized protein (174 aa).

The disordered stretch occupies residues 137-174 (TNVTLGDDTPKSYDAPVSAIPPPATATTANATGVKPLE).

This is an uncharacterized protein from Acanthamoeba polyphaga (Amoeba).